A 167-amino-acid chain; its full sequence is NAD(P)H-quinone oxidoreductase subunit I, chloroplastic (167 aa).

2 4Fe-4S ferredoxin-type domains span residues 55–84 and 95–124; these read GRIH…VDWI and KNYS…MTEE. 8 residues coordinate [4Fe-4S] cluster: C64, C67, C70, C74, C104, C107, C110, and C114.

Belongs to the complex I 23 kDa subunit family. As to quaternary structure, NDH is composed of at least 16 different subunits, 5 of which are encoded in the nucleus. [4Fe-4S] cluster is required as a cofactor.

The protein localises to the plastid. Its subcellular location is the chloroplast thylakoid membrane. The catalysed reaction is a plastoquinone + NADH + (n+1) H(+)(in) = a plastoquinol + NAD(+) + n H(+)(out). The enzyme catalyses a plastoquinone + NADPH + (n+1) H(+)(in) = a plastoquinol + NADP(+) + n H(+)(out). Functionally, NDH shuttles electrons from NAD(P)H:plastoquinone, via FMN and iron-sulfur (Fe-S) centers, to quinones in the photosynthetic chain and possibly in a chloroplast respiratory chain. The immediate electron acceptor for the enzyme in this species is believed to be plastoquinone. Couples the redox reaction to proton translocation, and thus conserves the redox energy in a proton gradient. This Adiantum capillus-veneris (Maidenhair fern) protein is NAD(P)H-quinone oxidoreductase subunit I, chloroplastic.